Consider the following 305-residue polypeptide: Aspartate carbamoyltransferase catalytic subunit (305 aa).

Arginine 56 and threonine 57 together coordinate carbamoyl phosphate. Residue lysine 84 coordinates L-aspartate. Arginine 106, histidine 136, and glutamine 139 together coordinate carbamoyl phosphate. L-aspartate contacts are provided by arginine 169 and arginine 221. The carbamoyl phosphate site is built by alanine 262 and proline 263.

It belongs to the aspartate/ornithine carbamoyltransferase superfamily. ATCase family. As to quaternary structure, heterododecamer (2C3:3R2) of six catalytic PyrB chains organized as two trimers (C3), and six regulatory PyrI chains organized as three dimers (R2).

The catalysed reaction is carbamoyl phosphate + L-aspartate = N-carbamoyl-L-aspartate + phosphate + H(+). It participates in pyrimidine metabolism; UMP biosynthesis via de novo pathway; (S)-dihydroorotate from bicarbonate: step 2/3. Catalyzes the condensation of carbamoyl phosphate and aspartate to form carbamoyl aspartate and inorganic phosphate, the committed step in the de novo pyrimidine nucleotide biosynthesis pathway. This Streptococcus sanguinis (strain SK36) protein is Aspartate carbamoyltransferase catalytic subunit.